Reading from the N-terminus, the 365-residue chain is tRNA-specific 2-thiouridylase MnmA (365 aa).

ATP-binding positions include 6–13 and Leu-32; that span reads AMSGGVDS. The active-site Nucleophile is Cys-101. A disulfide bridge links Cys-101 with Cys-199. Gly-125 contacts ATP. The tract at residues 149–151 is interaction with tRNA; it reads KDQ. The active-site Cysteine persulfide intermediate is the Cys-199.

This sequence belongs to the MnmA/TRMU family.

The protein resides in the cytoplasm. The catalysed reaction is S-sulfanyl-L-cysteinyl-[protein] + uridine(34) in tRNA + AH2 + ATP = 2-thiouridine(34) in tRNA + L-cysteinyl-[protein] + A + AMP + diphosphate + H(+). In terms of biological role, catalyzes the 2-thiolation of uridine at the wobble position (U34) of tRNA, leading to the formation of s(2)U34. This chain is tRNA-specific 2-thiouridylase MnmA, found in Corynebacterium glutamicum (strain R).